The primary structure comprises 328 residues: POU domain, class 5, transcription factor 2 (328 aa).

Positions 1–25 are disordered; the sequence is MAGHRPSNHFCPLPGSGGGGPRGPM. One can recognise a POU-specific domain in the interval 118 to 192; it reads DISGILKELQ…LLKKWLKEVE (75 aa). The segment at residues 210–269 is a DNA-binding region (homeobox); sequence GKWRRASRERRIGNSLEKFFQRCPKPTPQQISHIAGCLQLQKDVVRVWFYNRSKMGSRPT.

Belongs to the POU transcription factor family. Class-5 subfamily. As to expression, expressed in skeletal and cardiac muscles, brain, heart and lung. Little or no detectable expression found in pancreas, kidney, liver or placenta.

It is found in the nucleus. Functionally, transcription factor that binds preferentially to the octamer motif (5'-ATGTTAAT-3'). May exert a regulatory function in meiotic events that are required for terminal differentiation of male germ cell. This chain is POU domain, class 5, transcription factor 2 (POU5F2), found in Homo sapiens (Human).